The primary structure comprises 205 residues: Urease accessory protein UreG (205 aa).

14–21 (GPVGSGKT) provides a ligand contact to GTP.

The protein belongs to the SIMIBI class G3E GTPase family. UreG subfamily. As to quaternary structure, homodimer. UreD, UreF and UreG form a complex that acts as a GTP-hydrolysis-dependent molecular chaperone, activating the urease apoprotein by helping to assemble the nickel containing metallocenter of UreC. The UreE protein probably delivers the nickel.

It localises to the cytoplasm. In terms of biological role, facilitates the functional incorporation of the urease nickel metallocenter. This process requires GTP hydrolysis, probably effectuated by UreG. The sequence is that of Urease accessory protein UreG from Escherichia coli O157:H7.